A 282-amino-acid chain; its full sequence is Bifunctional protein FolD (282 aa).

Residues 165–167 (NRS), serine 190, and isoleucine 231 contribute to the NADP(+) site.

It belongs to the tetrahydrofolate dehydrogenase/cyclohydrolase family. As to quaternary structure, homodimer.

The enzyme catalyses (6R)-5,10-methylene-5,6,7,8-tetrahydrofolate + NADP(+) = (6R)-5,10-methenyltetrahydrofolate + NADPH. It carries out the reaction (6R)-5,10-methenyltetrahydrofolate + H2O = (6R)-10-formyltetrahydrofolate + H(+). Its pathway is one-carbon metabolism; tetrahydrofolate interconversion. Its function is as follows. Catalyzes the oxidation of 5,10-methylenetetrahydrofolate to 5,10-methenyltetrahydrofolate and then the hydrolysis of 5,10-methenyltetrahydrofolate to 10-formyltetrahydrofolate. The polypeptide is Bifunctional protein FolD (Clostridium botulinum (strain Kyoto / Type A2)).